Reading from the N-terminus, the 695-residue chain is Pre-mRNA-splicing factor clf-1 (695 aa).

16 HAT repeats span residues 52-84 (EYQG…WELE), 86-118 (KEFA…AEIK), 120-152 (RNIN…VMEM), 154-185 (GDIP…LEKR), 187-218 (GEFD…FEEE), 220-259 (GTSD…YEAR), 261-295 (REYE…FEKQ), 305-337 (VILT…LEES), 339-373 (GDVD…LFLF), 383-419 (KDIG…FEIR), 421-452 (GQLT…LEQK), 454-486 (YEFE…LERG), 488-522 (DDLE…FEEE), 524-555 (GEYE…FEIN), 578-616 (EAKA…FEKT), and 621-654 (EDIE…YIFP).

It belongs to the crooked-neck family. Associated with the spliceosome.

The protein localises to the nucleus. Functionally, involved in pre-mRNA splicing and cell cycle progression. Required for the spliceosome assembly and initiation of the DNA replication. This is Pre-mRNA-splicing factor clf-1 (clf-1) from Neurospora crassa (strain ATCC 24698 / 74-OR23-1A / CBS 708.71 / DSM 1257 / FGSC 987).